We begin with the raw amino-acid sequence, 495 residues long: Probable cytochrome P450 513C1 (495 aa).

Residues Met-1–Asn-21 traverse the membrane as a helical segment. Cys-441 contacts heme.

The protein belongs to the cytochrome P450 family. The cofactor is heme.

The protein resides in the membrane. The protein is Probable cytochrome P450 513C1 (cyp513C1) of Dictyostelium discoideum (Social amoeba).